A 948-amino-acid polypeptide reads, in one-letter code: 3-hydroxy-3-methylglutaryl-coenzyme A reductase (948 aa).

Helical transmembrane passes span 9 to 25 (LLFFDCFSTGTFFVLLI), 55 to 71 (VIIFLVVFVYFIGVLTC), 96 to 112 (LILFTFALCSLSSVLFV), 124 to 140 (TSVFLLFSDLSVFFIVL), 207 to 223 (IIYIMIVFVFLPSFMRI), and 286 to 302 (CWSTTFVIFVSLIILHL). N-linked (GlcNAc...) asparagine glycosylation is present at asparagine 316. Residues 347 to 363 (VINANLVVYLFLGLFLF) traverse the membrane as a helical segment. Residues 364–466 (KRIRLNKPIN…MLTEKIKQGL (103 aa)) are linker. Residue asparagine 430 is glycosylated (N-linked (GlcNAc...) asparagine). Residues 467–948 (GHELSDTEIL…VNPEISHYTM (482 aa)) are catalytic. Catalysis depends on charge relay system residues glutamate 567, lysine 699, and aspartate 777. Histidine 869 functions as the Proton donor in the catalytic mechanism. Residue asparagine 895 is glycosylated (N-linked (GlcNAc...) asparagine).

Belongs to the HMG-CoA reductase family.

It localises to the endoplasmic reticulum membrane. Its subcellular location is the peroxisome membrane. It catalyses the reaction (R)-mevalonate + 2 NADP(+) + CoA = (3S)-3-hydroxy-3-methylglutaryl-CoA + 2 NADPH + 2 H(+). The protein operates within metabolic intermediate biosynthesis; (R)-mevalonate biosynthesis; (R)-mevalonate from acetyl-CoA: step 3/3. Functionally, this transmembrane glycoprotein is involved in the control of cholesterol and nonsterol isoprenoid compounds biosynthesis. It is the rate-limiting enzyme of sterol biosynthesis. The polypeptide is 3-hydroxy-3-methylglutaryl-coenzyme A reductase (Schistosoma mansoni (Blood fluke)).